A 664-amino-acid polypeptide reads, in one-letter code: DNA topoisomerase 4 subunit B (664 aa).

ATP-binding positions include tyrosine 7, asparagine 47, aspartate 74, 114–120 (GLHGVGA), and lysine 341. The disordered stretch occupies residues 386-418 (REAARKAREDARSGKKNKRKDTLLSGKLTPAQS). The segment covering 387 to 398 (EAARKAREDARS) has biased composition (basic and acidic residues). One can recognise a Toprim domain in the interval 424 to 538 (NELYLVEGDS…AGRVFIALPP (115 aa)). The Mg(2+) site is built by glutamate 430, aspartate 503, and aspartate 505.

Belongs to the type II topoisomerase family. ParE type 2 subfamily. As to quaternary structure, heterotetramer composed of ParC and ParE. Mg(2+) serves as cofactor. Requires Mn(2+) as cofactor. The cofactor is Ca(2+).

The enzyme catalyses ATP-dependent breakage, passage and rejoining of double-stranded DNA.. Functionally, topoisomerase IV is essential for chromosome segregation. It relaxes supercoiled DNA. Performs the decatenation events required during the replication of a circular DNA molecule. This Staphylococcus epidermidis (strain ATCC 35984 / DSM 28319 / BCRC 17069 / CCUG 31568 / BM 3577 / RP62A) protein is DNA topoisomerase 4 subunit B.